We begin with the raw amino-acid sequence, 127 residues long: Large ribosomal subunit protein uL24A (127 aa).

Belongs to the universal ribosomal protein uL24 family. As to quaternary structure, component of the large ribosomal subunit (LSU). Mature yeast ribosomes consist of a small (40S) and a large (60S) subunit. The 40S small subunit contains 1 molecule of ribosomal RNA (18S rRNA) and 33 different proteins (encoded by 57 genes). The large 60S subunit contains 3 rRNA molecules (25S, 5.8S and 5S rRNA) and 46 different proteins (encoded by 81 genes).

It is found in the cytoplasm. Functionally, component of the ribosome, a large ribonucleoprotein complex responsible for the synthesis of proteins in the cell. The small ribosomal subunit (SSU) binds messenger RNAs (mRNAs) and translates the encoded message by selecting cognate aminoacyl-transfer RNA (tRNA) molecules. The large subunit (LSU) contains the ribosomal catalytic site termed the peptidyl transferase center (PTC), which catalyzes the formation of peptide bonds, thereby polymerizing the amino acids delivered by tRNAs into a polypeptide chain. The nascent polypeptides leave the ribosome through a tunnel in the LSU and interact with protein factors that function in enzymatic processing, targeting, and the membrane insertion of nascent chains at the exit of the ribosomal tunnel. This chain is Large ribosomal subunit protein uL24A, found in Saccharomyces cerevisiae (strain ATCC 204508 / S288c) (Baker's yeast).